We begin with the raw amino-acid sequence, 206 residues long: dITP/XTP pyrophosphatase (206 aa).

7-12 (SCHGYK) contacts substrate. Catalysis depends on D70, which acts as the Proton acceptor. D70 contacts Mg(2+). Substrate-binding positions include T71, 154–157 (FGYD), K177, and 182–183 (HR).

This sequence belongs to the HAM1 NTPase family. In terms of assembly, homodimer. It depends on Mg(2+) as a cofactor.

The enzyme catalyses XTP + H2O = XMP + diphosphate + H(+). The catalysed reaction is dITP + H2O = dIMP + diphosphate + H(+). It catalyses the reaction ITP + H2O = IMP + diphosphate + H(+). In terms of biological role, pyrophosphatase that catalyzes the hydrolysis of nucleoside triphosphates to their monophosphate derivatives, with a high preference for the non-canonical purine nucleotides XTP (xanthosine triphosphate), dITP (deoxyinosine triphosphate) and ITP. Seems to function as a house-cleaning enzyme that removes non-canonical purine nucleotides from the nucleotide pool, thus preventing their incorporation into DNA/RNA and avoiding chromosomal lesions. This chain is dITP/XTP pyrophosphatase, found in Chlamydia caviae (strain ATCC VR-813 / DSM 19441 / 03DC25 / GPIC) (Chlamydophila caviae).